The primary structure comprises 274 residues: 2,3,4,5-tetrahydropyridine-2,6-dicarboxylate N-succinyltransferase (274 aa).

2 residues coordinate substrate: R104 and D141.

This sequence belongs to the transferase hexapeptide repeat family. In terms of assembly, homotrimer.

It is found in the cytoplasm. The enzyme catalyses (S)-2,3,4,5-tetrahydrodipicolinate + succinyl-CoA + H2O = (S)-2-succinylamino-6-oxoheptanedioate + CoA. The protein operates within amino-acid biosynthesis; L-lysine biosynthesis via DAP pathway; LL-2,6-diaminopimelate from (S)-tetrahydrodipicolinate (succinylase route): step 1/3. The sequence is that of 2,3,4,5-tetrahydropyridine-2,6-dicarboxylate N-succinyltransferase from Buchnera aphidicola subsp. Baizongia pistaciae (strain Bp).